The sequence spans 376 residues: Carbamoyl phosphate synthase small chain (376 aa).

The segment at methionine 1–glutamine 187 is CPSase. The L-glutamine site is built by serine 45, glycine 239, and glycine 241. Positions lysine 189–cysteine 376 constitute a Glutamine amidotransferase type-1 domain. Residue cysteine 266 is the Nucleophile of the active site. Residues leucine 267, glutamine 270, asparagine 308, glycine 310, and phenylalanine 311 each contribute to the L-glutamine site. Residues histidine 349 and glutamate 351 contribute to the active site.

Belongs to the CarA family. In terms of assembly, composed of two chains; the small (or glutamine) chain promotes the hydrolysis of glutamine to ammonia, which is used by the large (or ammonia) chain to synthesize carbamoyl phosphate. Tetramer of heterodimers (alpha,beta)4.

The catalysed reaction is hydrogencarbonate + L-glutamine + 2 ATP + H2O = carbamoyl phosphate + L-glutamate + 2 ADP + phosphate + 2 H(+). It catalyses the reaction L-glutamine + H2O = L-glutamate + NH4(+). It participates in amino-acid biosynthesis; L-arginine biosynthesis; carbamoyl phosphate from bicarbonate: step 1/1. It functions in the pathway pyrimidine metabolism; UMP biosynthesis via de novo pathway; (S)-dihydroorotate from bicarbonate: step 1/3. In terms of biological role, small subunit of the glutamine-dependent carbamoyl phosphate synthetase (CPSase). CPSase catalyzes the formation of carbamoyl phosphate from the ammonia moiety of glutamine, carbonate, and phosphate donated by ATP, constituting the first step of 2 biosynthetic pathways, one leading to arginine and/or urea and the other to pyrimidine nucleotides. The small subunit (glutamine amidotransferase) binds and cleaves glutamine to supply the large subunit with the substrate ammonia. This chain is Carbamoyl phosphate synthase small chain, found in Lawsonia intracellularis (strain PHE/MN1-00).